A 371-amino-acid polypeptide reads, in one-letter code: Probable protein phosphatase 2C 11 (371 aa).

A helical transmembrane segment spans residues 29–49 (FFFFLFNSQTISSFIIFYLFL). Residues 67–95 (PPLSVAPLRGDANSPPPESSSSPATKSSL) form a disordered region. Positions 85-94 (SSSSPATKSS) are enriched in low complexity. The 246-residue stretch at 123-368 (SYGYSSLKGK…DNITCIVVRF (246 aa)) folds into the PPM-type phosphatase domain. Mn(2+) contacts are provided by Asp-159, Gly-160, Asp-320, and Asp-359.

It belongs to the PP2C family. Mg(2+) is required as a cofactor. Requires Mn(2+) as cofactor.

The protein resides in the membrane. It catalyses the reaction O-phospho-L-seryl-[protein] + H2O = L-seryl-[protein] + phosphate. The catalysed reaction is O-phospho-L-threonyl-[protein] + H2O = L-threonyl-[protein] + phosphate. This Arabidopsis thaliana (Mouse-ear cress) protein is Probable protein phosphatase 2C 11.